The chain runs to 180 residues: Thioredoxin 3 (180 aa).

The Cytoplasmic portion of the chain corresponds to 1-3 (MAL). Residues 4 to 24 (ICIGSVCFSLFHIGVIILLII) traverse the membrane as a helical; Signal-anchor for type II membrane protein segment. Residues 25-180 (NYFSSHIKKI…FQKYCLEKAK (156 aa)) are Lumenal-facing. A Thioredoxin domain is found at 29–176 (SHIKKIFPSF…IEKAFQKYCL (148 aa)). Catalysis depends on nucleophile residues Cys99 and Cys102. The cysteines at positions 99 and 102 are disulfide-linked.

The protein belongs to the thioredoxin family. Post-translationally, the disulfide bond between Cys-99 and Cys-102 acts as a redox-active center and is reduced by thioredoxin reductase TRXR.

It is found in the endoplasmic reticulum membrane. In terms of biological role, participates in various redox reactions through the reversible oxidation of its active center dithiol to a disulfide and catalyzes dithiol-disulfide exchange reactions. This chain is Thioredoxin 3, found in Plasmodium falciparum (isolate 3D7).